The sequence spans 26 residues: Turripeptide OL49 (26 aa).

Contains 3 disulfide bonds. Expressed by the venom duct.

The protein resides in the secreted. Acts as a neurotoxin by inhibiting an ion channel. The protein is Turripeptide OL49 of Iotyrris olangoensis (Sea snail).